Here is a 163-residue protein sequence, read N- to C-terminus: Thiol peroxidase (163 aa).

The region spanning 16 to 162 (LQVGDTAHDF…YDAAIAAVKS (147 aa)) is the Thioredoxin domain. C58 acts as the Cysteine sulfenic acid (-SOH) intermediate in catalysis. C58 and C92 are joined by a disulfide.

It belongs to the peroxiredoxin family. Tpx subfamily. In terms of assembly, homodimer.

The catalysed reaction is a hydroperoxide + [thioredoxin]-dithiol = an alcohol + [thioredoxin]-disulfide + H2O. Thiol-specific peroxidase that catalyzes the reduction of hydrogen peroxide and organic hydroperoxides to water and alcohols, respectively. Plays a role in cell protection against oxidative stress by detoxifying peroxides. In Streptococcus sanguinis, this protein is Thiol peroxidase.